Here is a 123-residue protein sequence, read N- to C-terminus: D-ribose pyranase (123 aa).

Catalysis depends on His20, which acts as the Proton donor. Substrate-binding positions include Asp28, His90, and 112-114 (YAN).

Belongs to the RbsD / FucU family. RbsD subfamily. Homodecamer.

The protein resides in the cytoplasm. The enzyme catalyses beta-D-ribopyranose = beta-D-ribofuranose. It participates in carbohydrate metabolism; D-ribose degradation; D-ribose 5-phosphate from beta-D-ribopyranose: step 1/2. In terms of biological role, catalyzes the interconversion of beta-pyran and beta-furan forms of D-ribose. This chain is D-ribose pyranase, found in Corynebacterium glutamicum (strain ATCC 13032 / DSM 20300 / JCM 1318 / BCRC 11384 / CCUG 27702 / LMG 3730 / NBRC 12168 / NCIMB 10025 / NRRL B-2784 / 534).